Here is a 506-residue protein sequence, read N- to C-terminus: MTDDASTLHPTVPADAPVRVRFCPSPTGTPHVGLIRTALFNWAWARHTGGTLVFRIEDTDAARDSEESFQQILDALDWLGITWDEGVNVGGPHEPYRQSQRGEIYQDVLAKLVDSGYVYEDFSTPEEVEQRHRAKGEDPKRGYDNYDRDLTDEQKAAFRAEGRQPVLRLRMPDEDISFTDLVRGEITFKAGSVPDFVVARANGKPLYTLVNPVDDALMGITQVLRGEDLLSSTPRQIALYRALVAIGVAEFIPEFGHLPYVMGEGNKKLSKRDPESNLFHHRDNGFIPEGLLNYLALLGWSLSADEDIFTVEQLVANFDIHDVLANPARFDVKKATAINGTHVRMLDPQDFRDRLVPYLRAAGLVGETLTPRENEILDRAAPLVQERMNLLGETEGLLGFLFRGDDEIVVAPDAAKQLKDSAPEVLDAALAALEPLDDFTAEAIETALREAIVDGLGIKPRLAFGPVRTAVSGQRISPPLFESLEILGRESSLARIAALRAELAAN.

The short motif at Pro-24–Leu-34 is the 'HIGH' region element. Residues Thr-124–Asp-147 form a disordered region. Residues Val-128–Asp-147 show a composition bias toward basic and acidic residues. Positions Lys-268–Arg-272 match the 'KMSKS' region motif. Residue Lys-271 coordinates ATP.

Belongs to the class-I aminoacyl-tRNA synthetase family. Glutamate--tRNA ligase type 1 subfamily. In terms of assembly, monomer.

It localises to the cytoplasm. It carries out the reaction tRNA(Glu) + L-glutamate + ATP = L-glutamyl-tRNA(Glu) + AMP + diphosphate. Its function is as follows. Catalyzes the attachment of glutamate to tRNA(Glu) in a two-step reaction: glutamate is first activated by ATP to form Glu-AMP and then transferred to the acceptor end of tRNA(Glu). The chain is Glutamate--tRNA ligase from Kocuria rhizophila (strain ATCC 9341 / DSM 348 / NBRC 103217 / DC2201).